The chain runs to 321 residues: Basic endochitinase A (321 aa).

Residues Met-1–Ala-19 form the signal peptide. The region spanning Glu-20 to Gly-60 is the Chitin-binding type-1 domain. Cystine bridges form between Cys-22-Cys-37, Cys-31-Cys-43, Cys-34-Cys-61, Cys-36-Cys-50, and Cys-54-Cys-58. The segment at Gly-62–Gly-79 is hinge region (Gly/Pro/Thr-rich). The segment at Val-80–Ala-321 is catalytic. Cystine bridges form between Cys-101–Cys-163, Cys-175–Cys-183, and Cys-301–Cys-314. Glu-145 functions as the Proton donor in the catalytic mechanism.

The protein belongs to the glycosyl hydrolase 19 family. Chitinase class I subfamily. As to expression, localized in the aleurone cells of the seed endosperm (at protein level).

The catalysed reaction is Random endo-hydrolysis of N-acetyl-beta-D-glucosaminide (1-&gt;4)-beta-linkages in chitin and chitodextrins.. Defense against chitin-containing fungal pathogens. Binds the hyphal tips, lateral walls and septa of fungi and degrades mature chitin. In Secale cereale (Rye), this protein is Basic endochitinase A.